The following is a 3616-amino-acid chain: Replicase polyprotein 1ab (3616 aa).

Residues 8 to 28 form a C4-type; atypical zinc finger; that stretch reads CLCTPNARVFWEHGQVYCTRC. Residues 69-181 enclose the Peptidase C31 domain; sequence ECRPGGLCWL…KGLCPFSDAR (113 aa). Residues Cys76 and His147 each act as for Nsp1-alpha papain-like cysteine proteinase activity in the active site. A Peptidase C32 domain is found at 262 to 381; sequence NDTKFSKCWE…FRFQTRKYYG (120 aa). Active-site for Nsp1-beta papain-like cysteine proteinase activity residues include Cys269 and His340. The 106-residue stretch at 381-486 folds into the Peptidase C33 domain; sequence GYSPPGDGAC…RGVCGGECKF (106 aa). Catalysis depends on for Nsp2 cysteine proteinase activity residues Cys390 and His456. 2 disordered regions span residues 672 to 706 and 883 to 912; these read SRAL…REVP and PLKS…GAPR. The segment covering 676 to 690 has biased composition (basic residues); that stretch reads KSAKPKRKRNKKKKT. Polar residues predominate over residues 903–912; that stretch reads DQLSQDGAPR. The next 9 helical transmembrane spans lie at 942–962, 977–997, 1010–1030, 1060–1080, 1085–1105, 1289–1309, 1364–1384, 1386–1406, and 1425–1445; these read WLNH…SVVL, LFCL…FIPL, LSVF…VLPE, HIGV…VGGP, FYFL…AVAL, VADF…SAWL, ALMI…SLLV, VICV…VIAF, and VQFF…VILI. Positions 981-1105 are HD1; sequence CCVLLCFHFP…LGLVFLAVAL (125 aa). The interval 1289 to 1448 is HD2; sequence VADFVCLGLY…AVAVILISSW (160 aa). The region spanning 1513 to 1714 is the Peptidase S32 domain; that stretch reads GSLRTRGCAK…AVVESLPTPE (202 aa). Active-site charge relay system; for 3C-like serine proteinase activity residues include His1551, Asp1576, and Ser1628. Transmembrane regions (helical) follow at residues 1715-1735, 1737-1757, 1761-1781, and 1832-1852; these read GALS…LIHV, FVPV…VVLA, FSFA…VLLL, and SKEI…LSLF. An HD3 region spans residues 1737 to 1852; the sequence is FVPVIAVAFF…HVLALLLSLF (116 aa). The region spanning 2194-2352 is the NiRAN domain; that stretch reads SLNGLQQSSA…LPYKLHPVRG (159 aa). The RdRp catalytic domain occupies 2590–2724; the sequence is GRCLEADLAS…YNESDELPNY (135 aa). An AV ZBD domain is found at 2844–2907; the sequence is KKKCRTCAHC…SSAMNLNTEL (64 aa). The Zn(2+) site is built by Cys2850, Cys2853, Cys2863, Cys2868, His2871, His2873, His2875, His2877, Cys2884, His2886, Cys2893, and Cys2896. The (+)RNA virus helicase ATP-binding domain maps to 2964 to 3116; that stretch reads QVMKVAQTCA…AFSLMPGRQL (153 aa). Residue 2992–2999 coordinates ATP; the sequence is GAPGTGKT. In terms of domain architecture, (+)RNA virus helicase C-terminal spans 3117–3248; sequence IEVFRFGPAV…CGDQPKMIVG (132 aa). Residues 3272-3368 enclose the AV-Nsp11N/CoV-Nsp15M domain; the sequence is EGTASPLPQV…LTKYLKGESV (97 aa). In terms of domain architecture, NendoU spans 3370-3492; that stretch reads LPDSIMSTGR…MVWKDATAYF (123 aa).

This sequence belongs to the arteriviridae polyprotein family. Specific enzymatic cleavages in vivo by its own proteases yield mature proteins. There are two alternative pathways for processing. Either nsp4-5 is cleaved, which represents the major pathway or the nsp5-6 and nsp6-7 are processed, which represents the minor pathway. The major pathway occurs when nsp2 acts as a cofactor for nsp4.

Its subcellular location is the host membrane. The protein resides in the host cytoplasm. The protein localises to the host perinuclear region. It carries out the reaction RNA(n) + a ribonucleoside 5'-triphosphate = RNA(n+1) + diphosphate. The catalysed reaction is ATP + H2O = ADP + phosphate + H(+). It catalyses the reaction uridylyl-uridylyl-ribonucleotide-RNA = a 3'-end uridylyl-2',3'-cyclophospho-uridine-RNA + a 5'-end dephospho-ribonucleoside-RNA. Functionally, the replicase polyprotein 1ab is a multifunctional protein: it contains the activities necessary for the transcription of negative stranded RNA, leader RNA, subgenomic mRNAs and progeny virion RNA as well as proteinases responsible for the cleavage of the polyprotein into functional products. The Nsp1 chain is essential for viral subgenomic mRNA synthesis. In terms of biological role, the 3C-like serine proteinase chain is responsible for the majority of cleavages as it cleaves the C-terminus of the polyprotein. Its function is as follows. The helicase chain, which contains a zinc finger structure, displays RNA and DNA duplex-unwinding activities with 5' to 3' polarity. Functionally, plays a role in viral transcription/replication and prevents the simultaneous activation of host cell dsRNA sensors, such as MDA5/IFIH1, OAS, and PKR. Acts by degrading the 5'-polyuridines generated during replication of the poly(A) region of viral genomic and subgenomic RNAs. Catalyzes a two-step reaction in which a 2'3'-cyclic phosphate (2'3'-cP) is first generated by 2'-O transesterification, which is then hydrolyzed to a 3'-phosphate (3'-P). If not degraded, poly(U) RNA would hybridize with poly(A) RNA tails and activate host dsRNA sensors. The chain is Replicase polyprotein 1ab (rep) from Mus musculus domesticus (western European house mouse).